A 154-amino-acid polypeptide reads, in one-letter code: 6,7-dimethyl-8-ribityllumazine synthase (154 aa).

Residues Phe15, Thr47–Asp49, and Ala71–Ile73 each bind 5-amino-6-(D-ribitylamino)uracil. Glu76–Thr77 provides a ligand contact to (2S)-2-hydroxy-3-oxobutyl phosphate. His79 serves as the catalytic Proton donor. Leu104 serves as a coordination point for 5-amino-6-(D-ribitylamino)uracil. Arg119 is a binding site for (2S)-2-hydroxy-3-oxobutyl phosphate.

It belongs to the DMRL synthase family.

It carries out the reaction (2S)-2-hydroxy-3-oxobutyl phosphate + 5-amino-6-(D-ribitylamino)uracil = 6,7-dimethyl-8-(1-D-ribityl)lumazine + phosphate + 2 H2O + H(+). It participates in cofactor biosynthesis; riboflavin biosynthesis; riboflavin from 2-hydroxy-3-oxobutyl phosphate and 5-amino-6-(D-ribitylamino)uracil: step 1/2. Its function is as follows. Catalyzes the formation of 6,7-dimethyl-8-ribityllumazine by condensation of 5-amino-6-(D-ribitylamino)uracil with 3,4-dihydroxy-2-butanone 4-phosphate. This is the penultimate step in the biosynthesis of riboflavin. The chain is 6,7-dimethyl-8-ribityllumazine synthase from Saccharolobus islandicus (strain L.S.2.15 / Lassen #1) (Sulfolobus islandicus).